Consider the following 158-residue polypeptide: Sporulation-delaying protein SdpA (158 aa).

It is found in the cytoplasm. Functionally, required for the maturation of SdpC to SDP. Not required for SdpC signal peptide cleavage, secretion from the cell or disulfide bond formation. The chain is Sporulation-delaying protein SdpA from Bacillus subtilis (strain 168).